Reading from the N-terminus, the 507-residue chain is Histidine ammonia-lyase (507 aa).

The segment at residues alanine 141–glycine 143 is a cross-link (5-imidazolinone (Ala-Gly)). The residue at position 142 (serine 142) is a 2,3-didehydroalanine (Ser).

The protein belongs to the PAL/histidase family. In terms of processing, contains an active site 4-methylidene-imidazol-5-one (MIO), which is formed autocatalytically by cyclization and dehydration of residues Ala-Ser-Gly.

It localises to the cytoplasm. It carries out the reaction L-histidine = trans-urocanate + NH4(+). It functions in the pathway amino-acid degradation; L-histidine degradation into L-glutamate; N-formimidoyl-L-glutamate from L-histidine: step 1/3. In Burkholderia cenocepacia (strain HI2424), this protein is Histidine ammonia-lyase.